A 560-amino-acid polypeptide reads, in one-letter code: Ubiquitin carboxyl-terminal hydrolase MINDY-3 homolog (560 aa).

A compositionally biased stretch (basic and acidic residues) spans 1-13 (MNEKIVREQRGGE). 2 disordered regions span residues 1-30 (MNEK…AASA) and 44-91 (SHKT…MLNA). Composition is skewed to low complexity over residues 15–30 (SPSS…AASA) and 52–81 (TASS…SSSS). The Nucleophile role is filled by C139. The segment at 203–237 (TEAGSTKKRSPAGEEESALAGQAAGSSEEVEEAAE) is disordered. Phosphoserine occurs at positions 212 and 219. The Proton acceptor role is filled by H403.

This sequence belongs to the MINDY deubiquitinase family. FAM188 subfamily.

The enzyme catalyses Thiol-dependent hydrolysis of ester, thioester, amide, peptide and isopeptide bonds formed by the C-terminal Gly of ubiquitin (a 76-residue protein attached to proteins as an intracellular targeting signal).. In terms of biological role, hydrolase that can remove 'Lys-48'-linked conjugated ubiquitin from proteins. The polypeptide is Ubiquitin carboxyl-terminal hydrolase MINDY-3 homolog (mindy3) (Drosophila melanogaster (Fruit fly)).